A 294-amino-acid polypeptide reads, in one-letter code: 7,8-dihydropterin-6-methyl-4-(beta-D-ribofuranosyl)-aminobenzene-5'-phosphate synthase (294 aa).

Substrate-binding residues include Glu-116, Asp-186, Lys-228, and His-265.

This sequence belongs to the metallo-beta-lactamase superfamily. The cofactor is Mg(2+).

The catalysed reaction is 4-(beta-D-ribofuranosyl)aminobenzene 5'-phosphate + (7,8-dihydropterin-6-yl)methyl diphosphate = N-[(7,8-dihydropterin-6-yl)methyl]-4-(beta-D-ribofuranosyl)aniline 5'-phosphate + diphosphate. It participates in cofactor biosynthesis; 5,6,7,8-tetrahydromethanopterin biosynthesis. Functionally, catalyzes the condensation of 6-hydroxymethyl-7,8-dihydropterin pyrophosphate (DHPP) with 4-(beta-D-ribofuranosyl)-aminobenzene-5'-phosphate (beta-RFA-P) to form 7,8-dihydropterin-6-methyl-4-(beta-D-ribofuranosyl)-aminobenzene-5'-phosphate, a precursor in the biosynthesis of 5,6,7,8-tetrahydromethanopterin (H4MPT). To a lesser extent, is able to condense beta-RFA-P with another arylamine, 1-(4-aminophenyl)-1-deoxy-D-ribitol (APDR), to form 7,8-dihydropterin-6-methyl-1-(4-aminophenyl)-1-deoxy-D-ribitol. Dephosphorylated beta-RFA-P is not a substrate. This Methanocaldococcus jannaschii (strain ATCC 43067 / DSM 2661 / JAL-1 / JCM 10045 / NBRC 100440) (Methanococcus jannaschii) protein is 7,8-dihydropterin-6-methyl-4-(beta-D-ribofuranosyl)-aminobenzene-5'-phosphate synthase.